Reading from the N-terminus, the 91-residue chain is DNA-directed RNA polymerase subunit omega (91 aa).

Belongs to the RNA polymerase subunit omega family. In terms of assembly, the RNAP catalytic core consists of 2 alpha, 1 beta, 1 beta' and 1 omega subunit. When a sigma factor is associated with the core the holoenzyme is formed, which can initiate transcription.

The catalysed reaction is RNA(n) + a ribonucleoside 5'-triphosphate = RNA(n+1) + diphosphate. In terms of biological role, promotes RNA polymerase assembly. Latches the N- and C-terminal regions of the beta' subunit thereby facilitating its interaction with the beta and alpha subunits. The sequence is that of DNA-directed RNA polymerase subunit omega from Enterobacter sp. (strain 638).